A 152-amino-acid chain; its full sequence is Large ribosomal subunit protein bL9 (152 aa).

Belongs to the bacterial ribosomal protein bL9 family.

In terms of biological role, binds to the 23S rRNA. The protein is Large ribosomal subunit protein bL9 of Synechococcus elongatus (strain ATCC 33912 / PCC 7942 / FACHB-805) (Anacystis nidulans R2).